We begin with the raw amino-acid sequence, 341 residues long: Processive diacylglycerol beta-glycosyltransferase (341 aa).

This sequence belongs to the glycosyltransferase 2 family. Requires Mg(2+) as cofactor.

The protein resides in the cell membrane. It catalyses the reaction a 1,2-diacyl-sn-glycerol + UDP-alpha-D-glucose = a 1,2-diacyl-3-O-(beta-D-glucopyranosyl)-sn-glycerol + UDP + H(+). The enzyme catalyses a 1,2-diacyl-sn-glycerol + UDP-alpha-D-galactose = a 1,2-diacyl-3-O-(beta-D-galactosyl)-sn-glycerol + UDP + H(+). It carries out the reaction a 1,2-diacyl-3-O-(beta-D-galactosyl)-sn-glycerol + UDP-alpha-D-glucose = a 1,2-diacyl-3-O-[beta-D-glucopyranosyl-(1-&gt;6)-beta-D-galactopyranosyl]-sn-glycerol + UDP + H(+). The catalysed reaction is a 1,2-diacyl-3-O-(beta-D-galactosyl)-sn-glycerol + UDP-alpha-D-galactose = a 1,2-diacyl-3-O-[beta-D-galactosyl-(1-&gt;6)-beta-D-galactosyl]-sn-glycerol + UDP + H(+). Its activity is regulated as follows. Activated by the negatively charged lipid phosphatidylglycerol (PG). Functionally, processive glycosyltransferase involved in the biosynthesis of both the non-bilayer-prone beta-monoglycosyldiacylglycerol and the bilayer-forming membrane lipid glucosyl-galactosyldiacylglycerol and digalactosyl-diacylglycerol. These components contribute to regulate the properties and stability of the membrane. Catalyzes sequentially the transfers of glucosyl or galactosyl residues from UDP-Glc or UDP-Gal to diacylglycerol (DAG) acceptor to form the corresponding beta-glycosyl-DAG (3-O-(beta-D-glycopyranosyl)-1,2-diacyl-sn-glycerol). Then, only beta-galactosyl-DAG (3-O-(beta-D-galactopyranosyl)-1,2-diacyl-sn-glycerol) can act as acceptor to give the beta-glycosyl-beta-galactosyl-DAG product (3-O-(beta-D-glycopyranosyl-(1-&gt;6)-D-galactopyranosyl)-1,2-diacyl-sn-glycerol). It can also use alpha-Gal-beta-Gal-DAG, ceramide (Cer) and beta-Gal-Cer as sugar acceptors. The enzyme is supposed to be mainly a galactosyltransferase, with higher glycosyltransferase activity for the addition of the second glycosyl on beta-Gal-DAG as acceptor. The main glycolipid produced in vivo is beta-Glc-beta-Gal-DAG with a beta-1,6 linkage. The polypeptide is Processive diacylglycerol beta-glycosyltransferase (Mycoplasma pneumoniae (strain ATCC 29342 / M129 / Subtype 1) (Mycoplasmoides pneumoniae)).